The sequence spans 202 residues: Probable chemoreceptor glutamine deamidase CheD (202 aa).

This sequence belongs to the CheD family.

The enzyme catalyses L-glutaminyl-[protein] + H2O = L-glutamyl-[protein] + NH4(+). Functionally, probably deamidates glutamine residues to glutamate on methyl-accepting chemotaxis receptors (MCPs), playing an important role in chemotaxis. This is Probable chemoreceptor glutamine deamidase CheD from Thiobacillus denitrificans (strain ATCC 25259 / T1).